A 461-amino-acid polypeptide reads, in one-letter code: Piperine synthase (461 aa).

Residues H168 and D387 each act as proton acceptor in the active site. Positions 459–461 (SRM) match the Microbody targeting signal motif.

It belongs to the plant acyltransferase family. Monomer. As to expression, confined to immature fruits perisperm. Also detectable in roots.

The protein localises to the cytoplasm. It carries out the reaction piperidine + (E,E)-piperoyl-CoA = piperine + CoA + H(+). The catalysed reaction is pyrrolidine + (E,E)-piperoyl-CoA = piperyline + CoA + H(+). It catalyses the reaction (E,E)-piperoyl-CoA + 2-methylpropan-1-amine = (E,E)-piperlonguminine + CoA + H(+). It functions in the pathway aromatic compound metabolism. Its function is as follows. Involved in the biosynthesis of aromatic piperamides natural products such as piperine (1-piperoyl-piperidine), the pungent principle contributing, together with several terpenoids, to the aromatic properties of black pepper fruits, and displaying numerous pharmacological activities such as antiproliferative, antitumor, antiangiogenesis, antioxidant, antidiabetic, antiobesity, cardioprotective, antimicrobial, antiaging, and immunomodulatory effects. Mediates mainly the conversion of piperidine and piperoyl-CoA to piperine. Can also use pyrrolidine and isobutylamine as acceptors and 3,4-methylenedioxycinnamoyl-CoA as an alternative CoA-donor with a lower efficiency. This chain is Piperine synthase, found in Piper nigrum (Black pepper).